Consider the following 282-residue polypeptide: Deoxyribonuclease-1 (282 aa).

A signal peptide spans 1–22 (MRGMKLLGALLALAALLQGAVS). Asn40 carries N-linked (GlcNAc...) asparagine glycosylation. Residue Glu100 is part of the active site. The cysteines at positions 123 and 126 are disulfide-linked. N-linked (GlcNAc...) asparagine glycosylation occurs at Asn128. The active site involves His156. A disulfide bridge links Cys195 with Cys231.

This sequence belongs to the DNase I family. The cofactor is Ca(2+). Requires Mg(2+) as cofactor. In terms of tissue distribution, principally in tissues of the digestive system. Highest levels found in urine, but also relatively abundant in semen and saliva.

The protein resides in the secreted. The protein localises to the zymogen granule. Its subcellular location is the nucleus envelope. The enzyme catalyses Endonucleolytic cleavage to 5'-phosphodinucleotide and 5'-phosphooligonucleotide end-products.. In terms of biological role, serum endocuclease secreted into body fluids by a wide variety of exocrine and endocrine organs. Expressed by non-hematopoietic tissues and preferentially cleaves protein-free DNA. Among other functions, seems to be involved in cell death by apoptosis. Binds specifically to G-actin and blocks actin polymerization. Together with DNASE1L3, plays a key role in degrading neutrophil extracellular traps (NETs). NETs are mainly composed of DNA fibers and are released by neutrophils to bind pathogens during inflammation. Degradation of intravascular NETs by DNASE1 and DNASE1L3 is required to prevent formation of clots that obstruct blood vessels and cause organ damage following inflammation. The sequence is that of Deoxyribonuclease-1 from Homo sapiens (Human).